Reading from the N-terminus, the 249-residue chain is Probable septum site-determining protein MinC (249 aa).

The segment at 116 to 149 (AAVSPPPPPPPPPARAEPAAPVARPAPGRMQRNA) is disordered. A compositionally biased stretch (pro residues) spans 119-130 (SPPPPPPPPPAR). Residues 131–142 (AEPAAPVARPAP) are compositionally biased toward low complexity.

Belongs to the MinC family. Interacts with MinD and FtsZ.

Its function is as follows. Cell division inhibitor that blocks the formation of polar Z ring septums. Rapidly oscillates between the poles of the cell to destabilize FtsZ filaments that have formed before they mature into polar Z rings. Prevents FtsZ polymerization. This chain is Probable septum site-determining protein MinC, found in Xanthomonas campestris pv. campestris (strain B100).